Consider the following 271-residue polypeptide: Cyclic AMP-dependent transcription factor ATF-1 (271 aa).

The segment at 1–61 is disordered; the sequence is MEDSHKSTTS…QKAHGILARR (61 aa). Positions 31 to 90 constitute a KID domain; sequence QVSSLSESEESQDSSDSIGSSQKAHGILARRPSYRKILKDLSSEDTRGRKGDGENSGVSA. Phosphoserine; by CaMK1, CDK3, RPS6KA4 and RPS6KA5 is present on Ser-63. Residue Ser-198 is modified to Phosphoserine; by HIPK2. Glycyl lysine isopeptide (Lys-Gly) (interchain with G-Cter in SUMO2) cross-links involve residues Lys-208 and Lys-215. The region spanning 213-271 is the bZIP domain; the sequence is QLKREIRLMKNREAARECRRKKKEYVKCLENRVAVLENQNKTLIEELKTLKDLYSNKSV. Residues 215–239 are basic motif; sequence KREIRLMKNREAARECRRKKKEYVK. The tract at residues 241 to 262 is leucine-zipper; sequence LENRVAVLENQNKTLIEELKTL.

The protein belongs to the bZIP family. ATF subfamily. Binds DNA as a dimer. Interacts with HIPK2 and CDK3. Interacts with MOTS-c, a peptide produced by the mitochondrially encoded 12S rRNA MT-RNR1; the interaction occurs in the nucleus following metabolic stress. In terms of processing, phosphorylated at Ser-198 by HIPK2 in response to genotoxic stress. This phosphorylation promotes transcription repression of FTH1 and other antioxidant detoxification genes. The CDK3-mediated phosphorylation at Ser-63 promotes its transactivation and transcriptional activities. Phosphorylated at Ser-63 by RPS6KA4 and RPS6KA5 in response to mitogenic or stress stimuli.

The protein localises to the nucleus. This protein binds the cAMP response element (CRE) (consensus: 5'-GTGACGT[AC][AG]-3'), a sequence present in many viral and cellular promoters. Binds to the Tax-responsive element (TRE) of HTLV-I. Mediates PKA-induced stimulation of CRE-reporter genes. Represses the expression of FTH1 and other antioxidant detoxification genes. Triggers cell proliferation and transformation. This chain is Cyclic AMP-dependent transcription factor ATF-1 (ATF1), found in Homo sapiens (Human).